Here is a 528-residue protein sequence, read N- to C-terminus: Probable rhamnogalacturonate lyase A (528 aa).

A signal peptide spans 1-20; the sequence is MLSRTILFSTSFLWVRVANA. Cystine bridges form between cysteine 50–cysteine 93 and cysteine 184–cysteine 193.

This sequence belongs to the polysaccharide lyase 4 family.

It localises to the secreted. The enzyme catalyses Endotype eliminative cleavage of L-alpha-rhamnopyranosyl-(1-&gt;4)-alpha-D-galactopyranosyluronic acid bonds of rhamnogalacturonan I domains in ramified hairy regions of pectin leaving L-rhamnopyranose at the reducing end and 4-deoxy-4,5-unsaturated D-galactopyranosyluronic acid at the non-reducing end.. Functionally, pectinolytic enzymes consist of four classes of enzymes: pectin lyase, polygalacturonase, pectin methylesterase and rhamnogalacturonase. Degrades the rhamnogalacturonan I (RG-I) backbone of pectin. The sequence is that of Probable rhamnogalacturonate lyase A (rglA) from Aspergillus flavus (strain ATCC 200026 / FGSC A1120 / IAM 13836 / NRRL 3357 / JCM 12722 / SRRC 167).